The primary structure comprises 78 residues: UPF0335 protein A1C_00850 (78 aa).

It belongs to the UPF0335 family.

The polypeptide is UPF0335 protein A1C_00850 (Rickettsia akari (strain Hartford)).